We begin with the raw amino-acid sequence, 156 residues long: Cyanate hydratase (156 aa).

Active-site residues include Arg-96, Glu-99, and Ser-122.

Belongs to the cyanase family.

It catalyses the reaction cyanate + hydrogencarbonate + 3 H(+) = NH4(+) + 2 CO2. Catalyzes the reaction of cyanate with bicarbonate to produce ammonia and carbon dioxide. The sequence is that of Cyanate hydratase from Photorhabdus laumondii subsp. laumondii (strain DSM 15139 / CIP 105565 / TT01) (Photorhabdus luminescens subsp. laumondii).